Reading from the N-terminus, the 201-residue chain is Holliday junction branch migration complex subunit RuvA (201 aa).

Residues 1 to 64 (MIGRLRGTLA…EDAHLLYGFA (64 aa)) are domain I. Residues 65–143 (EKRERELFRE…AWENMPTIAP (79 aa)) form a domain II region. Residues 144 to 152 (LVMEPRASA) are flexible linker. The tract at residues 153 to 201 (TVSSAEADAVSALIALGFKPQEASRAVAAVPGEDLSSEEMIRQALKGMV) is domain III.

It belongs to the RuvA family. As to quaternary structure, homotetramer. Forms an RuvA(8)-RuvB(12)-Holliday junction (HJ) complex. HJ DNA is sandwiched between 2 RuvA tetramers; dsDNA enters through RuvA and exits via RuvB. An RuvB hexamer assembles on each DNA strand where it exits the tetramer. Each RuvB hexamer is contacted by two RuvA subunits (via domain III) on 2 adjacent RuvB subunits; this complex drives branch migration. In the full resolvosome a probable DNA-RuvA(4)-RuvB(12)-RuvC(2) complex forms which resolves the HJ.

Its subcellular location is the cytoplasm. In terms of biological role, the RuvA-RuvB-RuvC complex processes Holliday junction (HJ) DNA during genetic recombination and DNA repair, while the RuvA-RuvB complex plays an important role in the rescue of blocked DNA replication forks via replication fork reversal (RFR). RuvA specifically binds to HJ cruciform DNA, conferring on it an open structure. The RuvB hexamer acts as an ATP-dependent pump, pulling dsDNA into and through the RuvAB complex. HJ branch migration allows RuvC to scan DNA until it finds its consensus sequence, where it cleaves and resolves the cruciform DNA. This chain is Holliday junction branch migration complex subunit RuvA, found in Pseudomonas aeruginosa (strain LESB58).